Reading from the N-terminus, the 536-residue chain is Lysosomal acid glucosylceramidase (536 aa).

Positions 1–39 (MELSSPSREECPRPQGRVGIMAASLMGLLLLQAASWASG) are cleaved as a signal peptide. 2 disulfides stabilise this stretch: Cys43–Cys55 and Cys57–Cys62. N-linked (GlcNAc...) asparagine glycosylation is found at Asn58, Asn98, and Asn185. The Proton donor role is filled by Glu274. Residue Asn309 is glycosylated (N-linked (GlcNAc...) asparagine). Glu379 functions as the Nucleophile in the catalytic mechanism. Asn501 is a glycosylation site (N-linked (GlcNAc...) asparagine).

The protein belongs to the glycosyl hydrolase 30 family. Interacts with saposin-C. Interacts with SCARB2. Interacts with TCP1. Interacts with GRN; this interaction prevents aggregation of GBA1-SCARB2 complex via interaction with HSPA1A upon stress.

The protein localises to the lysosome membrane. The catalysed reaction is a beta-D-glucosyl-(1&lt;-&gt;1')-N-acylsphing-4-enine + H2O = an N-acylsphing-4-enine + D-glucose. It catalyses the reaction a beta-D-galactosyl-(1&lt;-&gt;1')-N-acylsphing-4-enine + H2O = an N-acylsphing-4-enine + D-galactose. It carries out the reaction cholesteryl 3-beta-D-glucoside + H2O = cholesterol + D-glucose. The enzyme catalyses a beta-D-glucosyl-(1&lt;-&gt;1')-N-acylsphing-4-enine + cholesterol = cholesteryl 3-beta-D-glucoside + an N-acylsphing-4-enine. The catalysed reaction is beta-D-glucosyl-N-(9Z-octadecenoyl)-sphing-4E-enine + cholesterol = N-(9Z-octadecenoyl)-sphing-4-enine + cholesteryl 3-beta-D-glucoside. It catalyses the reaction beta-D-glucosyl-N-octanoylsphing-4E-enine + cholesterol = N-octanoylsphing-4-enine + cholesteryl 3-beta-D-glucoside. It carries out the reaction beta-D-glucosyl-N-dodecanoylsphing-4-enine + cholesterol = N-dodecanoylsphing-4-enine + cholesteryl 3-beta-D-glucoside. The enzyme catalyses beta-D-glucosyl-(1&lt;-&gt;1)-N-octadecanoylsphing-4-enine + cholesterol = N-octadecanoylsphing-4-enine + cholesteryl 3-beta-D-glucoside. The catalysed reaction is beta-D-glucosyl-(1&lt;-&gt;1')-N-(15Z-tetracosenoyl)-sphing-4-enine + cholesterol = N-(15Z-tetracosenoyl)-sphing-4-enine + cholesteryl 3-beta-D-glucoside. It catalyses the reaction a beta-D-galactosyl-(1&lt;-&gt;1')-N-acylsphing-4-enine + cholesterol = cholesteryl 3-beta-D-galactoside + an N-acylsphing-4-enine. It carries out the reaction 1-(beta-D-galactosyl)-N-dodecanoylsphing-4-enine + cholesterol = cholesteryl 3-beta-D-galactoside + N-dodecanoylsphing-4-enine. The enzyme catalyses a beta-D-xylosyl-(1&lt;-&gt;1')-N-acylsphing-4-enine + cholesterol = cholesteryl 3-beta-D-xyloside + an N-acylsphing-4-enine. The catalysed reaction is beta-D-xylosyl-(1&lt;-&gt;1')-N-(9Z-octadecenoyl)-sphing-4-enine + cholesterol = cholesteryl 3-beta-D-xyloside + N-(9Z-octadecenoyl)-sphing-4-enine. The protein operates within steroid metabolism; cholesterol metabolism. Its pathway is sphingolipid metabolism. Glucosylceramidase that catalyzes, within the lysosomal compartment, the hydrolysis of glucosylceramides/GlcCers (such as beta-D-glucosyl-(1&lt;-&gt;1')-N-acylsphing-4-enine) into free ceramides (such as N-acylsphing-4-enine) and glucose. Plays a central role in the degradation of complex lipids and the turnover of cellular membranes. Through the production of ceramides, participates in the PKC-activated salvage pathway of ceramide formation. Catalyzes the glucosylation of cholesterol, through a transglucosylation reaction where glucose is transferred from GlcCer to cholesterol. GlcCer containing mono-unsaturated fatty acids (such as beta-D-glucosyl-N-(9Z-octadecenoyl)-sphing-4-enine) are preferred as glucose donors for cholesterol glucosylation when compared with GlcCer containing same chain length of saturated fatty acids (such as beta-D-glucosyl-N-octadecanoyl-sphing-4-enine). Under specific conditions, may alternatively catalyze the reverse reaction, transferring glucose from cholesteryl 3-beta-D-glucoside to ceramide. Can also hydrolyze cholesteryl 3-beta-D-glucoside producing glucose and cholesterol. Catalyzes the hydrolysis of galactosylceramides/GalCers (such as beta-D-galactosyl-(1&lt;-&gt;1')-N-acylsphing-4-enine), as well as the transfer of galactose between GalCers and cholesterol in vitro, but with lower activity than with GlcCers. Contrary to GlcCer and GalCer, xylosylceramide/XylCer (such as beta-D-xyosyl-(1&lt;-&gt;1')-N-acylsphing-4-enine) is not a good substrate for hydrolysis, however it is a good xylose donor for transxylosylation activity to form cholesteryl 3-beta-D-xyloside. The polypeptide is Lysosomal acid glucosylceramidase (GBA1) (Sus scrofa (Pig)).